The chain runs to 446 residues: Chromosomal replication initiator protein DnaA (446 aa).

Positions 1-72 (MKNISDLWNQ…ADTIYDLTGE (72 aa)) are domain I, interacts with DnaA modulators. A domain II region spans residues 72–109 (EELSIKFVIPQNQNEEDFMPKSPIKKMSKEEPADFPQN). The interval 110–326 (MLNPKYTFDT…GALIRVVAYS (217 aa)) is domain III, AAA+ region. ATP contacts are provided by Gly154, Gly156, Lys157, and Thr158. A domain IV, binds dsDNA region spans residues 327–446 (SLINKDINAD…QIKEIKEQLR (120 aa)).

Belongs to the DnaA family. Oligomerizes as a right-handed, spiral filament on DNA at oriC.

The protein resides in the cytoplasm. Functionally, plays an essential role in the initiation and regulation of chromosomal replication. ATP-DnaA binds to the origin of replication (oriC) to initiate formation of the DNA replication initiation complex once per cell cycle. Binds the DnaA box (a 9 base pair repeat at the origin) and separates the double-stranded (ds)DNA. Forms a right-handed helical filament on oriC DNA; dsDNA binds to the exterior of the filament while single-stranded (ss)DNA is stabiized in the filament's interior. The ATP-DnaA-oriC complex binds and stabilizes one strand of the AT-rich DNA unwinding element (DUE), permitting loading of DNA polymerase. After initiation quickly degrades to an ADP-DnaA complex that is not apt for DNA replication. Binds acidic phospholipids. The protein is Chromosomal replication initiator protein DnaA of Bacillus licheniformis (strain ATCC 14580 / DSM 13 / JCM 2505 / CCUG 7422 / NBRC 12200 / NCIMB 9375 / NCTC 10341 / NRRL NRS-1264 / Gibson 46).